A 185-amino-acid chain; its full sequence is MAAQKDQQKDAEGEGLSATTLLPKLIPSGAGREWLERRRATIRPWGTFVDQQRFSRPRNVGELCQRLVRNVEYYQSNYVFVFLGLILYCVVTSPMLLVALAVFFGACYILYLRTLQSKLVLFGREVSPAHQYALAGGVSFPFFWLAGAGSAVFWVLGATLVLIGSHAAFHQMEPADGEELQMEPV.

Residues 1–78 (MAAQKDQQKD…RNVEYYQSNY (78 aa)) are Cytoplasmic-facing. Positions 30-54 (AGREWLERRRATIRPWGTFVDQQRF) are required for interaction with prenylated RAB3A and VAMP2. 2 consecutive transmembrane segments (helical) span residues 79-94 (VFVFLGLILYCVVTSP) and 95-112 (MLLVALAVFFGACYILYL). Residues 113–131 (RTLQSKLVLFGREVSPAHQ) lie on the Cytoplasmic side of the membrane. 2 consecutive transmembrane segments (helical) span residues 132–148 (YALAGGVSFPFFWLAGA) and 149–165 (GSAVFWVLGATLVLIGS). The tract at residues 165-185 (SHAAFHQMEPADGEELQMEPV) is required for interaction with GDI1. The Cytoplasmic segment spans residues 166 to 185 (HAAFHQMEPADGEELQMEPV). The tract at residues 175–185 (ADGEELQMEPV) is required for interaction with prenylated RAB3A and VAMP2. The tract at residues 175–185 (ADGEELQMEPV) is homodimerization.

This sequence belongs to the PRA1 family. Homodimer. Interacts with VAMP2 (synaptobrevin-2), GDI1, NRDG1 and PCLO. Interacts with prenylated Rab proteins (including RAB5 and RAB6), and with the members of the Ras superfamily HRAS, RHOA, TC21, and RAP1A.

It localises to the cell membrane. Its subcellular location is the cytoplasm. The protein localises to the golgi apparatus. It is found in the cytoplasmic vesicle. The protein resides in the secretory vesicle. It localises to the synaptic vesicle. General Rab protein regulator required for vesicle formation from the Golgi complex. May control vesicle docking and fusion by mediating the action of Rab GTPases to the SNARE complexes. In addition it inhibits the removal of Rab GTPases from the membrane by GDI1. In Mus musculus (Mouse), this protein is Prenylated Rab acceptor protein 1 (Rabac1).